A 1164-amino-acid chain; its full sequence is MAVSRQTSSVAGIPGAPQRHSFAKIDAPIEVPGLLDLQRESFAWLVGTPEWRARAQAEAGEDVRIMSGLEEILEELSPIEDYSENMSLTLSEPRFDDVKSTIDEAKDKDINYAAPLYVTAEFTNSMSGEIKSQTVFIGDFPMMTDKGTFIINGTERVVVSQLVRSPGVYFDASIDASTERPLHSVKVIPSRGAWLEFDVDKRDTVGVRIDRKRRQPVTVLLKALGLTTQEITDRFGFSELMMSTLEKDGVDNTDEALLEIYRKQRPGESPTRDSAQALLENSFFKAKRYDLAKVGRYKVNRKLGLGGDTDGVMTLTEEDILTTIEYLVRLHAGEKSMTSPDGTEIPIDTDDIDHFGNRRLRTVGELIQNQVRVGLSRMERVVRERMTTQDAESITPTSLINVRPVSAAIREFFGTSQLSQFLDQNNSLSGLTHKRRLSALGPGGLSRERAGLEVRDVHPSHYGRMCPIETPEGPNIGLIGSLSSYARVNPFGFIETPYRKVVDGQITDEVYYFTADEEDRHVIAQANTPFDENHRFTEERIEVRLRGGDVEVVPYTEVDYMDVSPRQMVSVATAMIPFLEHDDANRALMGANMQRQAVPLLRSEAPFVGTGMELRAAYDAGDMIIAPKAGVVEYVSADYITVMDDEGVRDTFMLRKFERTNQGTCYNQTPLVDEGDRVEAGQVLADGPGTDNGEMALGKNLLVAFMPWEGHNYEDAIILNQRMVEEDVLTSIHIEEYEIDARDTKLGPEEITRDIPNVGEDVLADLDERGIVRIGADVRDGDILVGKVTPKGETELTPEERLLRAIFGEKAREVRDTSMKVPHGETGKVIGVRVFSREDDDDLAAGVNEMVRVYVAQKRKIQDGDKLAGRHGNKGVVGKILPQEDMPFLPDGTPIDIILNTHGVPRRMNIGQVLEVHLGWLAKAGWKVDPDSQDPKIQKMLETLPEELYEIPADSLTATPVFDGASNAELSGLLRSSLPNRDGERQVDDFGKSNLIDGRSGEPFPYPVAVGYMYMLKLHHLVDEKIHARSTGPYSMITQQPLGGKAQFGGQRFGEMEVWAMQAYGAAYTLQELLTIKSDDVVGRVKVYEAIVKGENIPDPGIPESFKVLLKELQSLCLNVEVLAADGTPMELSSDDDDELENANAALGINLSRDERPDADMDVS.

Disordered regions lie at residues 975 to 994 (RSSL…GKSN) and 1143 to 1164 (ANAA…MDVS). Composition is skewed to basic and acidic residues over residues 981 to 991 (RDGERQVDDFG) and 1152 to 1164 (SRDE…MDVS).

It belongs to the RNA polymerase beta chain family. In terms of assembly, the RNAP catalytic core consists of 2 alpha, 1 beta, 1 beta' and 1 omega subunit. When a sigma factor is associated with the core the holoenzyme is formed, which can initiate transcription.

The catalysed reaction is RNA(n) + a ribonucleoside 5'-triphosphate = RNA(n+1) + diphosphate. In terms of biological role, DNA-dependent RNA polymerase catalyzes the transcription of DNA into RNA using the four ribonucleoside triphosphates as substrates. This chain is DNA-directed RNA polymerase subunit beta, found in Corynebacterium jeikeium (strain K411).